The chain runs to 171 residues: Voltage-dependent P/Q-type calcium channel subunit alpha-1A (171 aa).

The helical transmembrane segment at 1–11 (FVTVLGSITDI) threads the bilayer. Residues 1 to 171 (FVTVLGSITD…LMLNLFVAVI (171 aa)) form an IV repeat. Topologically, residues 12-18 (LVTEFGN) are extracellular. The helical transmembrane segment at 19 to 37 (NFINLSFLRLFRAARLIKL) threads the bilayer. Over 38–56 (LRQGYTIRILLWTFVQSFK) the chain is Cytoplasmic. A helical membrane pass occupies residues 57–76 (ALPYVCLLIAMLFFIYAIIG). Over 77–143 (MQVFGNIGIE…ENSGIKEDEC (67 aa)) the chain is Extracellular. Residues 144–168 (GNEFAYFYFVSFIFLCSFLMLNLFV) traverse the membrane as a helical segment. At 169-171 (AVI) the chain is on the cytoplasmic side.

Belongs to the calcium channel alpha-1 subunit (TC 1.A.1.11) family. CACNA1A subfamily. In terms of assembly, voltage-dependent calcium channels are multisubunit complexes, consisting of alpha-1, alpha-2, beta and delta subunits in a 1:1:1:1 ratio. The channel activity is directed by the pore-forming and voltage-sensitive alpha-1 subunit. In many cases, this subunit is sufficient to generate voltage-sensitive calcium channel activity. The auxiliary subunits beta and alpha-2/delta linked by a disulfide bridge regulate the channel activity.

It is found in the cell membrane. It carries out the reaction Ca(2+)(in) = Ca(2+)(out). The isoform alpha-1A gives rise to P and/or Q-type calcium currents. P/Q-type calcium channels belong to the 'high-voltage activated' (HVA) group. This Gallus gallus (Chicken) protein is Voltage-dependent P/Q-type calcium channel subunit alpha-1A (CACNA1A).